The following is a 426-amino-acid chain: MEKFRVHGPYKLSGTVDISGAKNAALPILFATILAEEPISLTNVPDLKDVDTTFKILRKLGVVIERDANGVVQIDASHIQHYVAPYELVKTMRASIWALAPLVARFHQGQVSLPGGCTIGARPVDMHITSLEKMGAIIELDEGYVKATANGRLQGARIYMDKVSVGATLSVMMAATLAEGSTIIENAAREPEIVDTAHFLNAMGAEISGAGTDTITIKGKERLTGCQHHIVADRIETGTFLVAAAISGGKITCQGTKADTLDAVIEKLREAGMEVTVTENSITLDTKGQRPKAVNIRTMPHPGFPTDMQAQFTLLNAVAEGTSRITETIFENRFMHIPELNRMGAKAEIEGNTAICQGVEQLKPAEVMATDLRASISLVLAGCIASGETIVDRIYHIDRGYEHIEEKLRRIGAKIERFRESASSAE.

22-23 (KN) is a binding site for phosphoenolpyruvate. R93 contributes to the UDP-N-acetyl-alpha-D-glucosamine binding site. The active-site Proton donor is the C117. C117 is subject to 2-(S-cysteinyl)pyruvic acid O-phosphothioketal. Residues 162–165 (KVSV), D307, and I329 each bind UDP-N-acetyl-alpha-D-glucosamine.

Belongs to the EPSP synthase family. MurA subfamily.

Its subcellular location is the cytoplasm. It carries out the reaction phosphoenolpyruvate + UDP-N-acetyl-alpha-D-glucosamine = UDP-N-acetyl-3-O-(1-carboxyvinyl)-alpha-D-glucosamine + phosphate. It functions in the pathway cell wall biogenesis; peptidoglycan biosynthesis. In terms of biological role, cell wall formation. Adds enolpyruvyl to UDP-N-acetylglucosamine. This chain is UDP-N-acetylglucosamine 1-carboxyvinyltransferase, found in Haemophilus ducreyi (strain 35000HP / ATCC 700724).